The following is a 341-amino-acid chain: NADH-quinone oxidoreductase subunit H (341 aa).

A run of 8 helical transmembrane segments spans residues 6–26 (LIVS…LMAY), 76–96 (LVFL…AAVI), 118–138 (VAVL…ILGG), 157–177 (VISY…LSGS), 198–218 (LPNW…IAAV), 252–272 (FLAE…LFLG), 278–298 (FADG…FYVW), and 313–333 (GLAW…TGLV).

This sequence belongs to the complex I subunit 1 family. NDH-1 is composed of 14 different subunits. Subunits NuoA, H, J, K, L, M, N constitute the membrane sector of the complex.

It is found in the cell membrane. It catalyses the reaction a quinone + NADH + 5 H(+)(in) = a quinol + NAD(+) + 4 H(+)(out). Functionally, NDH-1 shuttles electrons from NADH, via FMN and iron-sulfur (Fe-S) centers, to quinones in the respiratory chain. The immediate electron acceptor for the enzyme in this species is believed to be ubiquinone. Couples the redox reaction to proton translocation (for every two electrons transferred, four hydrogen ions are translocated across the cytoplasmic membrane), and thus conserves the redox energy in a proton gradient. This subunit may bind ubiquinone. The chain is NADH-quinone oxidoreductase subunit H from Thermomicrobium roseum (strain ATCC 27502 / DSM 5159 / P-2).